The primary structure comprises 196 residues: ATP-dependent Clp protease proteolytic subunit (196 aa).

Serine 101 (nucleophile) is an active-site residue. Residue histidine 126 is part of the active site.

This sequence belongs to the peptidase S14 family. Component of the chloroplastic Clp protease core complex.

The protein resides in the plastid. Its subcellular location is the chloroplast stroma. The enzyme catalyses Hydrolysis of proteins to small peptides in the presence of ATP and magnesium. alpha-casein is the usual test substrate. In the absence of ATP, only oligopeptides shorter than five residues are hydrolyzed (such as succinyl-Leu-Tyr-|-NHMec, and Leu-Tyr-Leu-|-Tyr-Trp, in which cleavage of the -Tyr-|-Leu- and -Tyr-|-Trp bonds also occurs).. Its function is as follows. Cleaves peptides in various proteins in a process that requires ATP hydrolysis. Has a chymotrypsin-like activity. Plays a major role in the degradation of misfolded proteins. The polypeptide is ATP-dependent Clp protease proteolytic subunit (Eucalyptus globulus subsp. globulus (Tasmanian blue gum)).